The following is a 291-amino-acid chain: Ribosome biogenesis protein BRX1 (291 aa).

The region spanning 31-232 is the Brix domain; the sequence is QRTLLISSRG…VILILEGSFG (202 aa). Phosphoserine is present on Ser-285.

Belongs to the BRX1 family. As to quaternary structure, part of a complex that includes BRX1, RPF1, RPF2 and SSF1 or SSF2.

It localises to the nucleus. The protein resides in the nucleolus. Its function is as follows. Required for biogenesis of the 60S ribosomal subunit. The protein is Ribosome biogenesis protein BRX1 (BRX1) of Saccharomyces cerevisiae (strain ATCC 204508 / S288c) (Baker's yeast).